A 1039-amino-acid chain; its full sequence is MAGSADISKGCSGQLFAELHSLSHYSFLRSAASPEELVRRADDLGYAAIAITDECSVAGIVKAYQESKARDIKLVVGSEFRVPEVGTLVVLAPTREAYAELCKKITLFRSRSEKGHYQANIDDFFDGFSQCLLLWQPDFSQAQLLAIGEKLKSVWQQRFWLLYERHYQADDERAFQAMVELQQAVKVKVTCAGGVCMATIEQQPLYDILNAIQHGGSLAHQPGLASNNAEHHLRSLSELQQCYPQKWLAETLVIAQQCQFCLSELRYEYPAELVPEGMSASGYLKQLTEQGARWRYPQGVPESIKALYLKELSLIKEQSYEPFFLTIHDLVRFAREQGILFQGRGSAANSVVCYCLGITAVNPAQIQVLFERFISKERNEPPDIDVDFEHERREEVIQYIYRKYGRQRAALAATVITYRFKSAFRDVGKALGFSEQQLQYFRRNLDRRDKEQSWQQQLVQQHPEVTNSVRGQHLLQFTEQLMGTPRHLSQHVGGFVIAADDLSRLVPVENASMTDRTVIQWDKTDLESLGLLKVDVLALGMLTALRKMLALINLRYDQQLTMATIPQEDSRVYQQLQTADSMGIFQIESRAQMNMLPRLKPKTFYDLVIQIAIVRPGPIQGDMVHPFLRRRAGLEEVDYPSDEVKSVLERTLGVPIFQEQVIKLAMVAAGFSGGEADQLRRAMASWGQNGHLTRFEDKLINGMLERGYKQEFAERLFRQICGFGQYGFPESHSASFANLAYVSSWFKTYHPAAFYVGLLNSLPMGFYSASQLVQDAQRHGVAFLAADINASDWNYCWLPKEDTNSDETVRMGLRQIQGLSESRIKHTLMQRPEDGFTSMHELRKSGLRDSDINALARADALKSIAGHRHQAHWQSLSMSDQQMPLFENVKDRPARQLPAPDEPDNIKADYESTGLTLGRHPLALLRNNPELKNCVLASDLMTCRSGQVLTLAGLVTCRQRPGTRSGVTFLTLEDESGNSNVVVWANTARQFRQCFLTSNLLWVKGIVEIHDGVVHVIAGRLKDLSGLLSFTRLESRRFH.

The protein belongs to the DNA polymerase type-C family. DnaE2 subfamily.

The protein localises to the cytoplasm. It carries out the reaction DNA(n) + a 2'-deoxyribonucleoside 5'-triphosphate = DNA(n+1) + diphosphate. DNA polymerase involved in damage-induced mutagenesis and translesion synthesis (TLS). It is not the major replicative DNA polymerase. The protein is Error-prone DNA polymerase of Idiomarina loihiensis (strain ATCC BAA-735 / DSM 15497 / L2-TR).